We begin with the raw amino-acid sequence, 342 residues long: S-adenosyl-L-methionine-dependent tRNA 4-demethylwyosine synthase (342 aa).

[2Fe-2S] cluster is bound by residues Cys45, Cys58, and Cys71. Residues 64 to 312 (YGIHSHRCLQ…VKHLPGYHIE (249 aa)) form the Radical SAM core domain. The [4Fe-4S] cluster site is built by Cys81, Cys85, and Cys88.

This sequence belongs to the TYW1 family. In terms of assembly, monomer. The cofactor is [2Fe-2S] cluster. It depends on [4Fe-4S] cluster as a cofactor.

The protein resides in the cytoplasm. The enzyme catalyses N(1)-methylguanosine(37) in tRNA(Phe) + pyruvate + S-adenosyl-L-methionine = 4-demethylwyosine(37) in tRNA(Phe) + 5'-deoxyadenosine + L-methionine + CO2 + H2O. In terms of biological role, component of the wyosine derivatives biosynthesis pathway that catalyzes the condensation of N-methylguanine with 2 carbon atoms from pyruvate to form the tricyclic 4-demethylwyosine (imG-14) on guanosine-37 of tRNA(Phe). The chain is S-adenosyl-L-methionine-dependent tRNA 4-demethylwyosine synthase from Pyrococcus horikoshii (strain ATCC 700860 / DSM 12428 / JCM 9974 / NBRC 100139 / OT-3).